The following is a 124-amino-acid chain: Ribonuclease pancreatic (124 aa).

Basic and acidic residues predominate over residues 1–13 (SETAAEKFERQHM). The interval 1 to 23 (SETAAEKFERQHMDSYSSSSSNS) is disordered. 2 residues coordinate substrate: Lys-7 and Arg-10. His-12 acts as the Proton acceptor in catalysis. Cystine bridges form between Cys-26-Cys-84, Cys-40-Cys-95, Cys-58-Cys-110, and Cys-65-Cys-72. Residues 41-45 (KPVNT), Lys-66, and Arg-85 contribute to the substrate site. His-119 functions as the Proton donor in the catalytic mechanism.

Belongs to the pancreatic ribonuclease family. As to quaternary structure, monomer. Interacts with and forms tight 1:1 complexes with RNH1. Dimerization of two such complexes may occur. Interaction with RNH1 inhibits this protein. Pancreas.

It localises to the secreted. It carries out the reaction an [RNA] containing cytidine + H2O = an [RNA]-3'-cytidine-3'-phosphate + a 5'-hydroxy-ribonucleotide-3'-[RNA].. It catalyses the reaction an [RNA] containing uridine + H2O = an [RNA]-3'-uridine-3'-phosphate + a 5'-hydroxy-ribonucleotide-3'-[RNA].. Endonuclease that catalyzes the cleavage of RNA on the 3' side of pyrimidine nucleotides. Acts on single-stranded and double-stranded RNA. The sequence is that of Ribonuclease pancreatic (RNASE1) from Camelus bactrianus (Bactrian camel).